The primary structure comprises 207 residues: Large ribosomal subunit protein uL4 (207 aa).

Positions 50-76 are disordered; it reads KTKTVSEVSGTTKKPFKQKGTGNARQG.

Belongs to the universal ribosomal protein uL4 family. In terms of assembly, part of the 50S ribosomal subunit.

One of the primary rRNA binding proteins, this protein initially binds near the 5'-end of the 23S rRNA. It is important during the early stages of 50S assembly. It makes multiple contacts with different domains of the 23S rRNA in the assembled 50S subunit and ribosome. Its function is as follows. Forms part of the polypeptide exit tunnel. The polypeptide is Large ribosomal subunit protein uL4 (Rickettsia typhi (strain ATCC VR-144 / Wilmington)).